Here is a 755-residue protein sequence, read N- to C-terminus: Polyribonucleotide nucleotidyltransferase (755 aa).

Asp-493 and Asp-499 together coordinate Mg(2+). The KH domain occupies 560 to 619 (PRIMTIQIPVDKIGALIGPGGKTIRNICDTTGAQIDIEDDGRVFITAPDGEAAKKAISMI). Residues 629–698 (GDIFLGKVVS…NTGKISLSRR (70 aa)) form the S1 motif domain. Residues 704-755 (ETPEARKAAGAAPRPRPREEQRGGREEPRSLREELRGPRRDGERPRPRRRDD) form a disordered region. Residues 719 to 755 (RPREEQRGGREEPRSLREELRGPRRDGERPRPRRRDD) are compositionally biased toward basic and acidic residues.

The protein belongs to the polyribonucleotide nucleotidyltransferase family. Mg(2+) serves as cofactor.

Its subcellular location is the cytoplasm. It carries out the reaction RNA(n+1) + phosphate = RNA(n) + a ribonucleoside 5'-diphosphate. Involved in mRNA degradation. Catalyzes the phosphorolysis of single-stranded polyribonucleotides processively in the 3'- to 5'-direction. The polypeptide is Polyribonucleotide nucleotidyltransferase (Chloroflexus aggregans (strain MD-66 / DSM 9485)).